The sequence spans 699 residues: Epithelial sodium channel subunit alpha (699 aa).

Positions 1-71 are disordered; it reads MLDHTRAPEL…EPRQPTEEEE (71 aa). The Cytoplasmic segment spans residues 1 to 110; that stretch reads MLDHTRAPEL…CSKHNRMKTA (110 aa). A helical transmembrane segment spans residues 111-131; that stretch reads FWAVLWLCTFGMMYWQFALLF. The Extracellular segment spans residues 132–589; that stretch reads EEYFSYPVSL…SQWSLWFGSS (458 aa). Intrachain disulfides connect Cys-158–Cys-332, Cys-256–Cys-263, Cys-309–Cys-316, Cys-421–Cys-506, Cys-443–Cys-483, Cys-443–Cys-502, Cys-447–Cys-498, Cys-456–Cys-483, Cys-456–Cys-506, and Cys-458–Cys-472. Positions 200–270 are gating release of inhibition by proteolysis (GRIP); protease-sensitive region that is responsible for the proteolytic activation of the channel; the sequence is RRRSTRDLRG…SDCFYQTYSS (71 aa). The interval 211–244 is disordered; sequence LPHPLQRLRTPPPPNPARSARSASSSVRDNNPQV. Residues 227–238 show a composition bias toward low complexity; it reads ARSARSASSSVR. A helical membrane pass occupies residues 590 to 610; the sequence is VLSVVEMAELIFDLLVITLIM. Topologically, residues 611 to 699 are cytoplasmic; it reads LLHRFRSRYW…SSACAPAMAL (89 aa). A disordered region spans residues 637–699; the sequence is ASSFPSRFCP…SSACAPAMAL (63 aa). Over residues 656–667 the composition is skewed to low complexity; the sequence is PQQGTTPPLALT. The PY motif; recruits WW domain-containing proteins and is thereby required for ubiquitination and inhibition of the channel by NEDD4 and NEDD4L motif lies at 669-673; that stretch reads PPPAY.

The protein belongs to the amiloride-sensitive sodium channel (TC 1.A.6) family. SCNN1A subfamily. As to quaternary structure, heterotrimer; containing an alpha/SCNN1A, a beta/SCNN1B and a gamma/SCNN1G subunit. Interacts with WWP1 (via WW domains). Interacts with WWP2 (via WW domains); inhibits the channel. Interacts with BPIFA1; the interaction is indirect via SCNN1B and inhibits the proteolytic processing of SCNN1A and SCNN1G and the activation of ENaC. Interacts with the full-length immature form of PCSK9 (pro-PCSK9). Ubiquitinated. Can be ubiquitinated at multiple sites and undergo monoubiquitination and polyubiquitination. Ubiquitination by NEDD4 or NEDD4L inhibits the ENaC channel through endocytosis, intracellular retention and degradation of its individual subunits. Post-translationally, ENaC is activated through the proteolytic maturation of its subunits. Furin cleaves the SCNN1A subunit, which results in a stepwise increase in the open probability of the channel due to the release of an inhibitory tract. BPIFA1, which is recruited by the SCNN1B subunit, prevents the proteolytic activation of ENaC. In terms of processing, N-glycosylated. As to expression, expressed in kidney (at protein level). Expressed in lung (at protein level). Expressed in the epididymis (at protein level). In the caput and corpus regions of the epididymis, expressed uniformly on the luminal and basal surfaces of the ducts and in the sperm in the duct lumen. Also expressed in distal colon and, at low levels, in liver.

The protein localises to the apical cell membrane. The protein resides in the cell projection. It localises to the cilium. It is found in the cytoplasmic granule. Its subcellular location is the cytoplasm. The protein localises to the cytoplasmic vesicle. The protein resides in the secretory vesicle. It localises to the acrosome. It is found in the flagellum. The catalysed reaction is Na(+)(in) = Na(+)(out). Its activity is regulated as follows. Originally identified and characterized by its inhibition by the diuretic drug amiloride. This is one of the three pore-forming subunits of the heterotrimeric epithelial sodium channel (ENaC), a critical regulator of sodium balance and fluid homeostasis. ENaC operates in epithelial tissues, where it mediates the electrodiffusion of sodium ions from extracellular fluid through the apical membrane of cells, with water following osmotically. It plays a key role in maintaining sodium homeostasis through electrogenic sodium reabsorption in the kidneys. Additionally, ENaC is essential for airway surface liquid homeostasis, which is crucial for proper mucus clearance. The protein is Epithelial sodium channel subunit alpha of Mus musculus (Mouse).